The primary structure comprises 237 residues: ADTIVAVELDSYPNTDIGDPNYPHIGIDIKSVRSKSTARWNMQTGKVGTVHISYNSVSKRLSAVVSYSGSSSTTVSYDVDLNNVLPEWVRVGLSATTGLYKQTNTILSWSFTSKLKTNSIADENSLHFSFHKFSQNPKDLILQGDASTDSDGNLQLTKVSSSGDPQGNSVGRALFYAPVHIWEKSAVVASFDATFTFLIKSPDREPADGITFFIANTDTTIPSGSGGRLLGLFPDAN.

Positions 8 and 10 each coordinate Mn(2+). Ca(2+) contacts are provided by aspartate 10, tyrosine 12, asparagine 14, and aspartate 19. A carbohydrate is bound by residues tyrosine 12 and asparagine 14. Residues aspartate 19 and histidine 24 each coordinate Mn(2+). A carbohydrate is bound at residue 98–100; it reads GLY. A Ca(2+)-binding site is contributed by aspartate 208. A carbohydrate is bound by residues glycine 227 and arginine 228.

Belongs to the leguminous lectin family. As to quaternary structure, homotetramer; dimer of dimers. Post-translationally, concanavalin A-like lectins of the Diocleinae subtribe undergo proteolytic processing referred to as circular permutation. The propeptide is split into an N-terminal and a C-terminal part, the gamma and beta chain, respectively. These are then religated in beta-gamma order to form the mature alpha chain. The beta and gamma chains can often be detected in cell extracts. Residues 1-118 of the mature chain, as displayed here, probably constitute the beta chain in the propeptide, residues 119-237 the gamma chain.

D-mannose/D-glucose-binding lectin with hemagglutinating activity towards rabbit and human erythrocytes. In rats, induces dose-dependent paw edema. Has low cytotoxicity against Artemisia sp. This is Lectin from Macropsychanthus comosus (Sea purse).